A 247-amino-acid chain; its full sequence is Acetoacetate decarboxylase (247 aa).

Catalysis depends on Lys116, which acts as the Schiff-base intermediate with acetoacetate.

Belongs to the ADC family.

The catalysed reaction is acetoacetate + H(+) = acetone + CO2. Functionally, catalyzes the conversion of acetoacetate to acetone and carbon dioxide. The protein is Acetoacetate decarboxylase of Ralstonia nicotianae (strain ATCC BAA-1114 / GMI1000) (Ralstonia solanacearum).